The following is a 421-amino-acid chain: RNase J-like protein (421 aa).

Zn(2+)-binding residues include H55, H57, D59, H60, H132, D153, and H389.

The protein belongs to the metallo-beta-lactamase superfamily. RNA-metabolizing metallo-beta-lactamase-like family. In terms of assembly, forms homodimers on heating to 60 degrees Celsius which may be the active form. It depends on Zn(2+) as a cofactor.

With respect to regulation, inhibited by imidazole. A 5'-3' exoribonuclease with a strong reference for 5'-monophosphorylated RNA and no endoribonuclease activty. The polypeptide is RNase J-like protein (Methanocaldococcus jannaschii (strain ATCC 43067 / DSM 2661 / JAL-1 / JCM 10045 / NBRC 100440) (Methanococcus jannaschii)).